Here is a 360-residue protein sequence, read N- to C-terminus: Phosphoserine aminotransferase (360 aa).

Residue arginine 42 participates in L-glutamate binding. Residues 76–77, tryptophan 102, threonine 152, aspartate 172, and glutamine 195 each bind pyridoxal 5'-phosphate; that span reads AS. Lysine 196 is subject to N6-(pyridoxal phosphate)lysine. A pyridoxal 5'-phosphate-binding site is contributed by 237 to 238; the sequence is NT.

Belongs to the class-V pyridoxal-phosphate-dependent aminotransferase family. SerC subfamily. Homodimer. Pyridoxal 5'-phosphate serves as cofactor.

Its subcellular location is the cytoplasm. The enzyme catalyses O-phospho-L-serine + 2-oxoglutarate = 3-phosphooxypyruvate + L-glutamate. The catalysed reaction is 4-(phosphooxy)-L-threonine + 2-oxoglutarate = (R)-3-hydroxy-2-oxo-4-phosphooxybutanoate + L-glutamate. Its pathway is amino-acid biosynthesis; L-serine biosynthesis; L-serine from 3-phospho-D-glycerate: step 2/3. In terms of biological role, catalyzes the reversible conversion of 3-phosphohydroxypyruvate to phosphoserine and of 3-hydroxy-2-oxo-4-phosphonooxybutanoate to phosphohydroxythreonine. The chain is Phosphoserine aminotransferase from Bacillus cereus (strain ZK / E33L).